Consider the following 235-residue polypeptide: 7-cyano-7-deazaguanine synthase (235 aa).

Residue Phe9–Leu19 participates in ATP binding. Residues Cys197, Cys212, Cys215, and Cys218 each contribute to the Zn(2+) site.

This sequence belongs to the QueC family. It depends on Zn(2+) as a cofactor.

It catalyses the reaction 7-carboxy-7-deazaguanine + NH4(+) + ATP = 7-cyano-7-deazaguanine + ADP + phosphate + H2O + H(+). It participates in purine metabolism; 7-cyano-7-deazaguanine biosynthesis. Functionally, catalyzes the ATP-dependent conversion of 7-carboxy-7-deazaguanine (CDG) to 7-cyano-7-deazaguanine (preQ(0)). In Polaromonas sp. (strain JS666 / ATCC BAA-500), this protein is 7-cyano-7-deazaguanine synthase.